Here is a 261-residue protein sequence, read N- to C-terminus: Class II histocompatibility antigen, M alpha chain (261 aa).

The signal sequence occupies residues 1 to 26 (MEHEQKSGAVLLRLLRLLWLLPHSWA). The alpha-1 stretch occupies residues 27 to 124 (VLEASTPVLW…KLEGQIPVSR (98 aa)). Residues 27–231 (VLEASTPVLW…ALPSDLLENA (205 aa)) are Lumenal-facing. N-linked (GlcNAc...) asparagine glycosylation is present at Asn41. Cystine bridges form between Cys50-Cys105 and Cys147-Cys202. The region spanning 114–215 (PKLEGQIPVS…HEIDRYTAIA (102 aa)) is the Ig-like C1-type domain. The alpha-2 stretch occupies residues 125–217 (GLSVAEVFTL…IDRYTAIAYW (93 aa)). Residues 218-231 (VPQNALPSDLLENA) are connecting peptide. A helical transmembrane segment spans residues 232 to 252 (LCGVAFALGVLGTIIGIVFFL). Residues 253–261 (CSQRPCSGD) lie on the Cytoplasmic side of the membrane.

This sequence belongs to the MHC class II family. Heterodimer of an alpha chain (DMA) and a beta chain (DMB). Interacts with MHCII; this interaction mediates rapid selection of high-affinity peptides.

It localises to the late endosome membrane. The protein localises to the lysosome membrane. Its function is as follows. Plays a critical role in catalyzing the release of class II-associated invariant chain peptide (CLIP) from newly synthesized MHC class II molecules and freeing the peptide binding site for acquisition of antigenic peptides. This Mus musculus (Mouse) protein is Class II histocompatibility antigen, M alpha chain (H2-DMa).